The following is a 337-amino-acid chain: Anthranilate phosphoribosyltransferase (337 aa).

5-phospho-alpha-D-ribose 1-diphosphate-binding positions include Gly82, Gly85–Asp86, Thr90, Asn92–Thr95, Lys110–Ser118, and Ser122. Gly82 provides a ligand contact to anthranilate. Ser94 is a binding site for Mg(2+). Arg168 lines the anthranilate pocket. Mg(2+) contacts are provided by Asp226 and Glu227.

It belongs to the anthranilate phosphoribosyltransferase family. In terms of assembly, homodimer. Mg(2+) serves as cofactor.

It catalyses the reaction N-(5-phospho-beta-D-ribosyl)anthranilate + diphosphate = 5-phospho-alpha-D-ribose 1-diphosphate + anthranilate. It functions in the pathway amino-acid biosynthesis; L-tryptophan biosynthesis; L-tryptophan from chorismate: step 2/5. Its function is as follows. Catalyzes the transfer of the phosphoribosyl group of 5-phosphorylribose-1-pyrophosphate (PRPP) to anthranilate to yield N-(5'-phosphoribosyl)-anthranilate (PRA). This chain is Anthranilate phosphoribosyltransferase, found in Francisella tularensis subsp. tularensis (strain WY96-3418).